Consider the following 145-residue polypeptide: Bacilliredoxin BLi02578/BL01507 (145 aa).

This sequence belongs to the bacilliredoxin family.

This Bacillus licheniformis (strain ATCC 14580 / DSM 13 / JCM 2505 / CCUG 7422 / NBRC 12200 / NCIMB 9375 / NCTC 10341 / NRRL NRS-1264 / Gibson 46) protein is Bacilliredoxin BLi02578/BL01507.